The sequence spans 602 residues: MDDTKTASPAPARAYETPPAERPITDAEAARAAALSANEHIKIASGYLRGTLADGLLKHATGAISEDDGQLVKFHGMYLQDDRDLRPERTRKKLEKAYSFMIRLRIAGGVVSPRQWLALDDIARTYANGTLRATTRQTFQYHGVIKSNLKRTLQAIDAVLLDTIAACGDVNRNVMAATNPAQTGAHAAAYRLAKDISDSLLPKTNAWREIWLDGERVAGGEDEAAEPVYGRTYLPRKFKTVVAVPPSNEVDVFAHDLGFIAILDKKNALKGWNVTVGGGMGMTHGEPDTFPRTADLLGFCEPADALKVAEAVMTVQRDWGNRKSRKNARLKYTIERYGLAAFRAEVERRVGKPLREPKPFQFTGNGDRYGWVEGEDGRHHLTLYVPSGRIRDVEGGPRYLSGLRRIAEIHEGDFRLTGNQNVIVANVPAGARAEIDRLVAEYGLTIGAGALRRNSLACVALPTCGLALAESERFMPDLLTRLEERLAAHGLRDEDITVRMTGCPNGCARPFIAEIGFVGRGPERYNVYLGAAFDGSRLSKLYADDVAAADIPALLDPLFAAYARERIPGERFGDFVIRAGYVARTVNGPDFHDRTGPLRAVA.

A disordered region spans residues 1-23; it reads MDDTKTASPAPARAYETPPAERP. [4Fe-4S] cluster-binding residues include Cys458, Cys464, Cys503, and Cys507. Cys507 is a siroheme binding site.

This sequence belongs to the nitrite and sulfite reductase 4Fe-4S domain family. In terms of assembly, alpha(8)-beta(8). The alpha component is a flavoprotein, the beta component is a hemoprotein. Siroheme is required as a cofactor. [4Fe-4S] cluster serves as cofactor.

The catalysed reaction is hydrogen sulfide + 3 NADP(+) + 3 H2O = sulfite + 3 NADPH + 4 H(+). It functions in the pathway sulfur metabolism; hydrogen sulfide biosynthesis; hydrogen sulfide from sulfite (NADPH route): step 1/1. Component of the sulfite reductase complex that catalyzes the 6-electron reduction of sulfite to sulfide. This is one of several activities required for the biosynthesis of L-cysteine from sulfate. This is Sulfite reductase [NADPH] hemoprotein beta-component from Methylobacterium sp. (strain 4-46).